The primary structure comprises 1207 residues: DNA-directed RNA polymerase subunit beta' (1207 aa).

Residues Cys60, Cys62, Cys75, and Cys78 each contribute to the Zn(2+) site. Asp449, Asp451, and Asp453 together coordinate Mg(2+). Cys822, Cys896, Cys903, and Cys906 together coordinate Zn(2+).

The protein belongs to the RNA polymerase beta' chain family. The RNAP catalytic core consists of 2 alpha, 1 beta, 1 beta' and 1 omega subunit. When a sigma factor is associated with the core the holoenzyme is formed, which can initiate transcription. It depends on Mg(2+) as a cofactor. Zn(2+) serves as cofactor.

The enzyme catalyses RNA(n) + a ribonucleoside 5'-triphosphate = RNA(n+1) + diphosphate. Its function is as follows. DNA-dependent RNA polymerase catalyzes the transcription of DNA into RNA using the four ribonucleoside triphosphates as substrates. The chain is DNA-directed RNA polymerase subunit beta' from Staphylococcus aureus (strain USA300).